The primary structure comprises 170 residues: MNPMNEVQISKATVSIGVGEAGEKLSRAITLLEQMFDQTPVKTFSKVTNPEFGIRKRQPIACKLTLRGEKADKAIEMVLEGINKNIKPTQFDAQGNLSFGIKEHIDIPGMKYNPDIGIFGMNVSVTFEKPGYRIAKRRIQQKKVPAKHRISKEETMKYMEDNFNVNYVTE.

The protein belongs to the universal ribosomal protein uL5 family. Part of the 50S ribosomal subunit; contacts the 5S rRNA and probably tRNA. Forms a bridge to the 30S subunit in the 70S ribosome.

Its function is as follows. This is one of the proteins that bind and probably mediate the attachment of the 5S RNA into the large ribosomal subunit, where it forms part of the central protuberance. In the 70S ribosome it contacts protein S13 of the 30S subunit (bridge B1b), connecting the 2 subunits; this bridge is implicated in subunit movement. May contact the P site tRNA; the 5S rRNA and some of its associated proteins might help stabilize positioning of ribosome-bound tRNAs. This is Large ribosomal subunit protein uL5 from Methanobrevibacter smithii (strain ATCC 35061 / DSM 861 / OCM 144 / PS).